Here is a 361-residue protein sequence, read N- to C-terminus: Phospho-N-acetylmuramoyl-pentapeptide-transferase (361 aa).

10 helical membrane-spanning segments follow: residues 21–41 (YLTV…LWIG), 74–94 (MGGI…ANLA), 97–117 (YVWF…VDDY), 132–152 (WKYF…YAIG), 168–188 (VMPQ…VGTG), 199–219 (GLAI…AWAT), 239–259 (LVIF…FNTY), 264–284 (FMGD…AVLV), 288–308 (FLLV…ILQV), and 339–359 (VIIR…ITLK).

It belongs to the glycosyltransferase 4 family. MraY subfamily. The cofactor is Mg(2+).

Its subcellular location is the cell inner membrane. It catalyses the reaction UDP-N-acetyl-alpha-D-muramoyl-L-alanyl-gamma-D-glutamyl-meso-2,6-diaminopimeloyl-D-alanyl-D-alanine + di-trans,octa-cis-undecaprenyl phosphate = di-trans,octa-cis-undecaprenyl diphospho-N-acetyl-alpha-D-muramoyl-L-alanyl-D-glutamyl-meso-2,6-diaminopimeloyl-D-alanyl-D-alanine + UMP. It functions in the pathway cell wall biogenesis; peptidoglycan biosynthesis. Functionally, catalyzes the initial step of the lipid cycle reactions in the biosynthesis of the cell wall peptidoglycan: transfers peptidoglycan precursor phospho-MurNAc-pentapeptide from UDP-MurNAc-pentapeptide onto the lipid carrier undecaprenyl phosphate, yielding undecaprenyl-pyrophosphoryl-MurNAc-pentapeptide, known as lipid I. The polypeptide is Phospho-N-acetylmuramoyl-pentapeptide-transferase (Histophilus somni (strain 129Pt) (Haemophilus somnus)).